Consider the following 119-residue polypeptide: Beta-2-microglobulin (119 aa).

The N-terminal stretch at Met1–Ala20 is a signal peptide. In terms of domain architecture, Ig-like C1-type spans Pro25–Lys114. A disulfide bridge links Cys45 with Cys100.

This sequence belongs to the beta-2-microglobulin family. In terms of assembly, heterodimer of an alpha chain and a beta chain. Beta-2-microglobulin is the beta-chain of major histocompatibility complex class I molecules.

The protein resides in the secreted. Its function is as follows. Component of the class I major histocompatibility complex (MHC). Involved in the presentation of peptide antigens to the immune system. The protein is Beta-2-microglobulin (B2M) of Cebuella pygmaea (Pygmy marmoset).